The following is an 85-amino-acid chain: Large ribosomal subunit protein bL27 (85 aa).

Positions 1-10 (MAQKKGGGST) are enriched in gly residues. The interval 1–20 (MAQKKGGGSTRNGRDSQPKM) is disordered.

This sequence belongs to the bacterial ribosomal protein bL27 family.

In Methylibium petroleiphilum (strain ATCC BAA-1232 / LMG 22953 / PM1), this protein is Large ribosomal subunit protein bL27.